The primary structure comprises 495 residues: Protein FAM83F (495 aa).

An N-acetylalanine modification is found at Ala2. Residues 2 to 294 are DUF1669; the sequence is AESQLSCLDE…LYAISEEVNL (293 aa). Ser4 is modified (phosphoserine). 2 disordered regions span residues 341-362 and 384-495; these read QQRE…GESA and PISP…CVIS. Residues 447-458 show a composition bias toward low complexity; that stretch reads PAVPSSMASSPS. Residue Ser477 is modified to Phosphoserine.

Belongs to the FAM83 family. As to quaternary structure, directly interacts (via DUF1669) with CSNK1A1 and CSNK1A1L.

It is found in the cell membrane. The sequence is that of Protein FAM83F (Fam83f) from Mus musculus (Mouse).